We begin with the raw amino-acid sequence, 165 residues long: Crossover junction endodeoxyribonuclease RuvC (165 aa).

Residues D7, E67, and D140 contribute to the active site. Mg(2+) is bound by residues D7, E67, and D140.

Belongs to the RuvC family. In terms of assembly, homodimer which binds Holliday junction (HJ) DNA. The HJ becomes 2-fold symmetrical on binding to RuvC with unstacked arms; it has a different conformation from HJ DNA in complex with RuvA. In the full resolvosome a probable DNA-RuvA(4)-RuvB(12)-RuvC(2) complex forms which resolves the HJ. Mg(2+) is required as a cofactor.

Its subcellular location is the cytoplasm. The catalysed reaction is Endonucleolytic cleavage at a junction such as a reciprocal single-stranded crossover between two homologous DNA duplexes (Holliday junction).. Its function is as follows. The RuvA-RuvB-RuvC complex processes Holliday junction (HJ) DNA during genetic recombination and DNA repair. Endonuclease that resolves HJ intermediates. Cleaves cruciform DNA by making single-stranded nicks across the HJ at symmetrical positions within the homologous arms, yielding a 5'-phosphate and a 3'-hydroxyl group; requires a central core of homology in the junction. The consensus cleavage sequence is 5'-(A/T)TT(C/G)-3'. Cleavage occurs on the 3'-side of the TT dinucleotide at the point of strand exchange. HJ branch migration catalyzed by RuvA-RuvB allows RuvC to scan DNA until it finds its consensus sequence, where it cleaves and resolves the cruciform DNA. The polypeptide is Crossover junction endodeoxyribonuclease RuvC (Halothermothrix orenii (strain H 168 / OCM 544 / DSM 9562)).